We begin with the raw amino-acid sequence, 242 residues long: LexA repressor (242 aa).

Residues 26 to 46 (FEEMKAALNLKSKSGIHRLIS) constitute a DNA-binding region (H-T-H motif). Active-site for autocatalytic cleavage activity residues include Ser163 and Lys201.

This sequence belongs to the peptidase S24 family. In terms of assembly, homodimer.

The catalysed reaction is Hydrolysis of Ala-|-Gly bond in repressor LexA.. In terms of biological role, represses a number of genes involved in the response to DNA damage (SOS response), including recA and lexA. In the presence of single-stranded DNA, RecA interacts with LexA causing an autocatalytic cleavage which disrupts the DNA-binding part of LexA, leading to derepression of the SOS regulon and eventually DNA repair. The sequence is that of LexA repressor from Granulibacter bethesdensis (strain ATCC BAA-1260 / CGDNIH1).